The sequence spans 248 residues: Probable transcriptional regulatory protein BARBAKC583_0163 (248 aa).

It belongs to the TACO1 family.

The protein localises to the cytoplasm. This Bartonella bacilliformis (strain ATCC 35685 / KC583 / Herrer 020/F12,63) protein is Probable transcriptional regulatory protein BARBAKC583_0163.